A 402-amino-acid polypeptide reads, in one-letter code: Deoxyguanosinetriphosphate triphosphohydrolase-like protein (402 aa).

In terms of domain architecture, HD spans 73 to 217 (RLTHTIEVAQ…AAIADDIAYN (145 aa)).

The protein belongs to the dGTPase family. Type 2 subfamily.

This is Deoxyguanosinetriphosphate triphosphohydrolase-like protein from Brucella anthropi (strain ATCC 49188 / DSM 6882 / CCUG 24695 / JCM 21032 / LMG 3331 / NBRC 15819 / NCTC 12168 / Alc 37) (Ochrobactrum anthropi).